We begin with the raw amino-acid sequence, 415 residues long: Serine hydroxymethyltransferase (415 aa).

(6S)-5,6,7,8-tetrahydrofolate-binding positions include Leu122 and 126–128 (GHL). Position 230 is an N6-(pyridoxal phosphate)lysine (Lys230).

It belongs to the SHMT family. In terms of assembly, homodimer. Pyridoxal 5'-phosphate serves as cofactor.

Its subcellular location is the cytoplasm. It carries out the reaction (6R)-5,10-methylene-5,6,7,8-tetrahydrofolate + glycine + H2O = (6S)-5,6,7,8-tetrahydrofolate + L-serine. The protein operates within one-carbon metabolism; tetrahydrofolate interconversion. It functions in the pathway amino-acid biosynthesis; glycine biosynthesis; glycine from L-serine: step 1/1. In terms of biological role, catalyzes the reversible interconversion of serine and glycine with tetrahydrofolate (THF) serving as the one-carbon carrier. This reaction serves as the major source of one-carbon groups required for the biosynthesis of purines, thymidylate, methionine, and other important biomolecules. Also exhibits THF-independent aldolase activity toward beta-hydroxyamino acids, producing glycine and aldehydes, via a retro-aldol mechanism. This Leptothrix cholodnii (strain ATCC 51168 / LMG 8142 / SP-6) (Leptothrix discophora (strain SP-6)) protein is Serine hydroxymethyltransferase.